We begin with the raw amino-acid sequence, 200 residues long: Peptidyl-tRNA hydrolase (200 aa).

Tyrosine 17 is a binding site for tRNA. Histidine 22 serves as the catalytic Proton acceptor. TRNA contacts are provided by tyrosine 78, asparagine 80, and asparagine 126.

The protein belongs to the PTH family. Monomer.

The protein localises to the cytoplasm. The catalysed reaction is an N-acyl-L-alpha-aminoacyl-tRNA + H2O = an N-acyl-L-amino acid + a tRNA + H(+). Its function is as follows. Hydrolyzes ribosome-free peptidyl-tRNAs (with 1 or more amino acids incorporated), which drop off the ribosome during protein synthesis, or as a result of ribosome stalling. Functionally, catalyzes the release of premature peptidyl moieties from peptidyl-tRNA molecules trapped in stalled 50S ribosomal subunits, and thus maintains levels of free tRNAs and 50S ribosomes. This chain is Peptidyl-tRNA hydrolase, found in Cutibacterium acnes (strain DSM 16379 / KPA171202) (Propionibacterium acnes).